Consider the following 510-residue polypeptide: Histidine ammonia-lyase (510 aa).

A cross-link (5-imidazolinone (Ala-Gly)) is located at residues 143-145 (ASG). Ser-144 bears the 2,3-didehydroalanine (Ser) mark.

This sequence belongs to the PAL/histidase family. Contains an active site 4-methylidene-imidazol-5-one (MIO), which is formed autocatalytically by cyclization and dehydration of residues Ala-Ser-Gly.

It localises to the cytoplasm. It catalyses the reaction L-histidine = trans-urocanate + NH4(+). The protein operates within amino-acid degradation; L-histidine degradation into L-glutamate; N-formimidoyl-L-glutamate from L-histidine: step 1/3. The protein is Histidine ammonia-lyase of Photobacterium profundum (strain SS9).